Reading from the N-terminus, the 155-residue chain is SsrA-binding protein (155 aa).

It belongs to the SmpB family.

The protein resides in the cytoplasm. Functionally, required for rescue of stalled ribosomes mediated by trans-translation. Binds to transfer-messenger RNA (tmRNA), required for stable association of tmRNA with ribosomes. tmRNA and SmpB together mimic tRNA shape, replacing the anticodon stem-loop with SmpB. tmRNA is encoded by the ssrA gene; the 2 termini fold to resemble tRNA(Ala) and it encodes a 'tag peptide', a short internal open reading frame. During trans-translation Ala-aminoacylated tmRNA acts like a tRNA, entering the A-site of stalled ribosomes, displacing the stalled mRNA. The ribosome then switches to translate the ORF on the tmRNA; the nascent peptide is terminated with the 'tag peptide' encoded by the tmRNA and targeted for degradation. The ribosome is freed to recommence translation, which seems to be the essential function of trans-translation. In Ligilactobacillus salivarius (strain UCC118) (Lactobacillus salivarius), this protein is SsrA-binding protein.